The sequence spans 1050 residues: Probable beta-glucosidase E (1050 aa).

Residues 1–87 (MPPPDSNPGS…RSSSTNGGHN (87 aa)) form a disordered region. At 1–174 (MPPPDSNPGS…VKYARIWRRT (174 aa)) the chain is on the cytoplasmic side. The segment covering 11 to 20 (FRDHLKHDNK) has biased composition (basic and acidic residues). Low complexity predominate over residues 47 to 56 (SPRSASASSS). A compositionally biased stretch (polar residues) spans 78-87 (RSSSTNGGHN). Residues 175-195 (LVVVIVALALLVWGFLRFTAA) traverse the membrane as a helical; Signal-anchor for type II membrane protein segment. Topologically, residues 196–1050 (QRQGPKVWPM…SRDLPLQAKY (855 aa)) are extracellular. Residues N236, N244, N300, and N430 are each glycosylated (N-linked (GlcNAc...) asparagine). The active site involves D458. N501, N540, N605, N884, N920, N929, and N993 each carry an N-linked (GlcNAc...) asparagine glycan.

The protein belongs to the glycosyl hydrolase 3 family.

The protein resides in the cell membrane. The catalysed reaction is Hydrolysis of terminal, non-reducing beta-D-glucosyl residues with release of beta-D-glucose.. It participates in glycan metabolism; cellulose degradation. Its function is as follows. Beta-glucosidases are one of a number of cellulolytic enzymes involved in the degradation of cellulosic biomass. Catalyzes the last step releasing glucose from the inhibitory cellobiose. In Aspergillus clavatus (strain ATCC 1007 / CBS 513.65 / DSM 816 / NCTC 3887 / NRRL 1 / QM 1276 / 107), this protein is Probable beta-glucosidase E (bglE).